We begin with the raw amino-acid sequence, 159 residues long: Putative RING-H2 finger protein ATL69 (159 aa).

The helical transmembrane segment at 13-33 (LGYGIAIAVSILVLISFIMLA) threads the bilayer. The RING-type; atypical zinc finger occupies 94–136 (CSICLCDYEAREPVRCIPECNHCFHTDCVDEWLRTSATCPLCR).

Belongs to the RING-type zinc finger family. ATL subfamily.

The protein resides in the membrane. It carries out the reaction S-ubiquitinyl-[E2 ubiquitin-conjugating enzyme]-L-cysteine + [acceptor protein]-L-lysine = [E2 ubiquitin-conjugating enzyme]-L-cysteine + N(6)-ubiquitinyl-[acceptor protein]-L-lysine.. Its pathway is protein modification; protein ubiquitination. In Arabidopsis thaliana (Mouse-ear cress), this protein is Putative RING-H2 finger protein ATL69 (ATL69).